Consider the following 156-residue polypeptide: Protein-export protein SecB (156 aa).

It belongs to the SecB family. Homotetramer, a dimer of dimers. One homotetramer interacts with 1 SecA dimer.

The protein localises to the cytoplasm. In terms of biological role, one of the proteins required for the normal export of preproteins out of the cell cytoplasm. It is a molecular chaperone that binds to a subset of precursor proteins, maintaining them in a translocation-competent state. It also specifically binds to its receptor SecA. In Paraburkholderia xenovorans (strain LB400), this protein is Protein-export protein SecB.